Reading from the N-terminus, the 52-residue chain is Alpha-crystallin B chain (52 aa).

It belongs to the small heat shock protein (HSP20) family. As to quaternary structure, homodimer. Aggregates with homologous proteins, including alpha-A-crystallin and the small heat shock protein HSPB1, to form large heteromeric complexes.

In terms of biological role, may contribute to the transparency and refractive index of the lens. This is Alpha-crystallin B chain (CRYAB) from Turdus merula (Common blackbird).